A 289-amino-acid chain; its full sequence is Digeranylgeranylglyceryl phosphate synthase (289 aa).

8 helical membrane passes run 17 to 37 (CLMA…ILTS), 50 to 70 (LFSS…GNAI), 106 to 126 (FALG…IALF), 141 to 161 (TPLL…LFGA), 163 to 183 (VFGL…ALAI), 221 to 241 (LIGF…MLGL), 243 to 263 (YLYL…QLLA), and 269 to 289 (KSSK…IAGV).

It belongs to the UbiA prenyltransferase family. DGGGP synthase subfamily. It depends on Mg(2+) as a cofactor.

Its subcellular location is the cell membrane. It catalyses the reaction sn-3-O-(geranylgeranyl)glycerol 1-phosphate + (2E,6E,10E)-geranylgeranyl diphosphate = 2,3-bis-O-(geranylgeranyl)-sn-glycerol 1-phosphate + diphosphate. Its pathway is membrane lipid metabolism; glycerophospholipid metabolism. Prenyltransferase that catalyzes the transfer of the geranylgeranyl moiety of geranylgeranyl diphosphate (GGPP) to the C2 hydroxyl of (S)-3-O-geranylgeranylglyceryl phosphate (GGGP). This reaction is the second ether-bond-formation step in the biosynthesis of archaeal membrane lipids. This Methanosarcina barkeri (strain Fusaro / DSM 804) protein is Digeranylgeranylglyceryl phosphate synthase.